A 362-amino-acid polypeptide reads, in one-letter code: Caveolae-associated protein 4 (362 aa).

A disordered region spans residues 1 to 24 (MEHNGSASNAGKIHQNRLSSVTED). The stretch at 100 to 120 (IKDVKARVEKQQVRVTKVETK) forms a coiled coil. Phosphoserine occurs at positions 152, 171, and 172. Composition is skewed to basic and acidic residues over residues 230 to 255 (RERLRQSGERLRQSGERLRQSGERFK), 275 to 289 (KAKDPKAEGQEVDRG), and 305 to 320 (HEFHSDEFSETEKEVT). Disordered stretches follow at residues 230–289 (RERL…VDRG) and 305–346 (HEFH…KPQV). Phosphotyrosine is present on Tyr-324. A Phosphothreonine modification is found at Thr-334. At Ser-353 the chain carries Phosphoserine.

It belongs to the CAVIN family. In terms of assembly, component of the CAVIN complex composed of CAVIN1, CAVIN2, CAVIN3 and CAVIN4. Interacts with CAVIN1. Interacts with CAVIN2; this augments the transactivation of NPPA. Interacts with CAV3, ADRA1A, ADRA1B, MAPK1 and MAPK3. As to expression, abundantly expressed in cardiac and skeletal muscle (at protein level). Weaker expression in aorta and lung. In heart, expressed in cardiomyocytes and vascular smooth muscle cells but not in other surrounding cells including vascular endothelial cells.

It is found in the cytoplasm. The protein resides in the myofibril. The protein localises to the sarcomere. It localises to the cytosol. Its subcellular location is the membrane. It is found in the caveola. The protein resides in the cell membrane. The protein localises to the sarcolemma. Functionally, modulates the morphology of formed caveolae in cardiomyocytes, but is not required for caveolar formation. Facilitates the recruitment of MAPK1/3 to caveolae within cardiomyocytes and regulates alpha-1 adrenergic receptor-induced hypertrophic responses in cardiomyocytes through MAPK1/3 activation. Contributes to proper membrane localization and stabilization of caveolin-3 (CAV3) in cardiomyocytes. Induces RHOA activation and activates NPPA transcription and myofibrillar organization through the Rho/ROCK signaling pathway. This Mus musculus (Mouse) protein is Caveolae-associated protein 4 (Cavin4).